We begin with the raw amino-acid sequence, 83 residues long: Cytochrome b559 subunit alpha (83 aa).

The chain crosses the membrane as a helical span at residues V22–W36. H24 lines the heme pocket.

The protein belongs to the PsbE/PsbF family. As to quaternary structure, heterodimer of an alpha subunit and a beta subunit. PSII is composed of 1 copy each of membrane proteins PsbA, PsbB, PsbC, PsbD, PsbE, PsbF, PsbH, PsbI, PsbJ, PsbK, PsbL, PsbM, PsbT, PsbX, PsbY, PsbZ, Psb30/Ycf12, peripheral proteins PsbO, CyanoQ (PsbQ), PsbU, PsbV and a large number of cofactors. It forms dimeric complexes. Heme b is required as a cofactor.

Its subcellular location is the cellular thylakoid membrane. In terms of biological role, this b-type cytochrome is tightly associated with the reaction center of photosystem II (PSII). PSII is a light-driven water:plastoquinone oxidoreductase that uses light energy to abstract electrons from H(2)O, generating O(2) and a proton gradient subsequently used for ATP formation. It consists of a core antenna complex that captures photons, and an electron transfer chain that converts photonic excitation into a charge separation. The protein is Cytochrome b559 subunit alpha of Synechococcus elongatus (strain ATCC 33912 / PCC 7942 / FACHB-805) (Anacystis nidulans R2).